The primary structure comprises 786 residues: Sucrose synthase (786 aa).

A GT-B glycosyltransferase region spans residues 259–736 (MIFSLVVLSP…ALKRVEERYN (478 aa)).

Belongs to the glycosyltransferase 1 family. Homotetramer.

The enzyme catalyses an NDP-alpha-D-glucose + D-fructose = a ribonucleoside 5'-diphosphate + sucrose + H(+). Catalyzes the reversible conversion of sucrose and a nucleotide disphosphate (NDP) into fructose and NDP-glucose; although the reaction is freely reversible in vitro, the physiological reaction seems to be sucrose cleavage. Unlike characterized plant enzymes prefers ADP as a cosubstrate, whereas plants prefer UDP. Its preference for ADP over UDP suggests it may directly link sucrose and glycogen metabolism. The sequence is that of Sucrose synthase from Denitrovibrio acetiphilus (strain DSM 12809 / NBRC 114555 / N2460).